A 310-amino-acid polypeptide reads, in one-letter code: Glutaminase (310 aa).

Residues Ser-66, Asn-117, Glu-161, Asn-168, Tyr-192, Tyr-244, and Val-262 each coordinate substrate.

This sequence belongs to the glutaminase family. As to quaternary structure, homotetramer.

The catalysed reaction is L-glutamine + H2O = L-glutamate + NH4(+). In Shigella boydii serotype 4 (strain Sb227), this protein is Glutaminase.